A 550-amino-acid chain; its full sequence is Glucose-6-phosphate isomerase (550 aa).

Glutamate 357 functions as the Proton donor in the catalytic mechanism. Residues histidine 388 and lysine 516 contribute to the active site.

It belongs to the GPI family.

The protein localises to the cytoplasm. The catalysed reaction is alpha-D-glucose 6-phosphate = beta-D-fructose 6-phosphate. The protein operates within carbohydrate biosynthesis; gluconeogenesis. Its pathway is carbohydrate degradation; glycolysis; D-glyceraldehyde 3-phosphate and glycerone phosphate from D-glucose: step 2/4. Its function is as follows. Catalyzes the reversible isomerization of glucose-6-phosphate to fructose-6-phosphate. This is Glucose-6-phosphate isomerase from Psychromonas ingrahamii (strain DSM 17664 / CCUG 51855 / 37).